The following is a 92-amino-acid chain: C-C motif chemokine 4 (92 aa).

The signal sequence occupies residues 1–23 (MKLCVTVLSLLVLMAAFCSPALS). 2 disulfides stabilise this stretch: Cys-34/Cys-58 and Cys-35/Cys-74.

This sequence belongs to the intercrine beta (chemokine CC) family. Homodimer. Interacts with CCR5.

It is found in the secreted. Functionally, monokine with inflammatory and chemokinetic properties. This Bos taurus (Bovine) protein is C-C motif chemokine 4 (CCL4).